The following is a 484-amino-acid chain: tRNA sulfurtransferase (484 aa).

A THUMP domain is found at 63-167; sequence QAFGERLACI…RDNLYMVTKR (105 aa). Residues 185–186, lysine 267, glycine 289, and glutamine 298 contribute to the ATP site; that span reads LI. Cysteines 346 and 458 form a disulfide. The 79-residue stretch at 406 to 484 folds into the Rhodanese domain; the sequence is IDTNQVVIDI…GYTNVKVYRP (79 aa). The active-site Cysteine persulfide intermediate is the cysteine 458.

It belongs to the ThiI family.

It is found in the cytoplasm. It catalyses the reaction [ThiI sulfur-carrier protein]-S-sulfanyl-L-cysteine + a uridine in tRNA + 2 reduced [2Fe-2S]-[ferredoxin] + ATP + H(+) = [ThiI sulfur-carrier protein]-L-cysteine + a 4-thiouridine in tRNA + 2 oxidized [2Fe-2S]-[ferredoxin] + AMP + diphosphate. It carries out the reaction [ThiS sulfur-carrier protein]-C-terminal Gly-Gly-AMP + S-sulfanyl-L-cysteinyl-[cysteine desulfurase] + AH2 = [ThiS sulfur-carrier protein]-C-terminal-Gly-aminoethanethioate + L-cysteinyl-[cysteine desulfurase] + A + AMP + 2 H(+). It functions in the pathway cofactor biosynthesis; thiamine diphosphate biosynthesis. Its function is as follows. Catalyzes the ATP-dependent transfer of a sulfur to tRNA to produce 4-thiouridine in position 8 of tRNAs, which functions as a near-UV photosensor. Also catalyzes the transfer of sulfur to the sulfur carrier protein ThiS, forming ThiS-thiocarboxylate. This is a step in the synthesis of thiazole, in the thiamine biosynthesis pathway. The sulfur is donated as persulfide by IscS. The sequence is that of tRNA sulfurtransferase from Shewanella baltica (strain OS155 / ATCC BAA-1091).